A 315-amino-acid polypeptide reads, in one-letter code: MSLLHFATRRLILQVLRELGLKAPPVHKTLKICIAMSRPSSNMADFRRFFARAKHIAIITGAGVSAESGVPTFRGPGGFWRKWKAEDLATPEAFAQNPSLVWEFYHYRREVILKKHPNAAHVAIAACEERLSLQGRRVVVITQNIDEFHTKAGTKNILELHGSLFKTRCCSCGNVRVNYNNPICPALEGKGLPDPNAPDAQIPLENLPRWKTTGDFSVLFLLDASPLYPSNLSCSHPVGAPALSEVADLGRWVGTSSLVYPAGMFGPHVALRGIPVAEFNTVTTPVTQNFRFHFSGLCGTTIPEALSPHESEKTG.

A mitochondrion-targeting transit peptide spans 1–39 (MSLLHFATRRLILQVLRELGLKAPPVHKTLKICIAMSRP). Residues 40–312 (SSNMADFRRF…PEALSPHESE (273 aa)) enclose the Deacetylase sirtuin-type domain. Residue 61-80 (GAGVSAESGVPTFRGPGGFW) participates in NAD(+) binding. Residues tyrosine 105 and arginine 108 each contribute to the substrate site. Position 143 to 146 (143 to 146 (QNID)) interacts with NAD(+). Histidine 161 (proton acceptor) is an active-site residue. Residues 254-256 (GTS), 280-282 (NTV), and cysteine 298 contribute to the NAD(+) site.

It belongs to the sirtuin family. Class III subfamily. In terms of assembly, monomer. Homodimer. Interacts with CPS1.

It is found in the mitochondrion. The protein resides in the cytoplasm. Its subcellular location is the cytosol. The protein localises to the nucleus. The enzyme catalyses N(6)-malonyl-L-lysyl-[protein] + NAD(+) + H2O = 2''-O-malonyl-ADP-D-ribose + nicotinamide + L-lysyl-[protein]. It catalyses the reaction N(6)-succinyl-L-lysyl-[protein] + NAD(+) + H2O = 2''-O-succinyl-ADP-D-ribose + nicotinamide + L-lysyl-[protein]. It carries out the reaction N(6)-glutaryl-L-lysyl-[protein] + NAD(+) + H2O = 2''-O-glutaryl-ADP-D-ribose + nicotinamide + L-lysyl-[protein]. Functionally, NAD-dependent lysine demalonylase, desuccinylase and deglutarylase that specifically removes malonyl, succinyl and glutaryl groups on target proteins. Activates CPS1 and contributes to the regulation of blood ammonia levels during prolonged fasting: acts by mediating desuccinylation and deglutarylation of CPS1, thereby increasing CPS1 activity in response to elevated NAD levels during fasting. Activates SOD1 by mediating its desuccinylation, leading to reduced reactive oxygen species. Activates SHMT2 by mediating its desuccinylation. Modulates ketogenesis through the desuccinylation and activation of HMGCS2. Has weak NAD-dependent protein deacetylase activity; however this activity may not be physiologically relevant in vivo. Can deacetylate cytochrome c (CYCS) and a number of other proteins in vitro such as UOX. The sequence is that of NAD-dependent protein deacylase sirtuin-5, mitochondrial from Monodelphis domestica (Gray short-tailed opossum).